The chain runs to 710 residues: Chaperonin-containing T-complex member BBS12 (710 aa).

This sequence belongs to the TCP-1 chaperonin family. BBS12 subfamily. Component of the chaperonin-containing T-complex (TRiC), a heterooligomeric complex of about 850 to 900 kDa that forms two stacked rings, 12 to 16 nm in diameter. Interacts with MKKS.

The protein localises to the cell projection. The protein resides in the cilium. Functionally, component of the chaperonin-containing T-complex (TRiC), a molecular chaperone complex that assists the folding of proteins upon ATP hydrolysis. As part of the TRiC complex may play a role in the assembly of BBSome, a complex involved in ciliogenesis regulating transports vesicles to the cilia. Involved in adipogenic differentiation. This chain is Chaperonin-containing T-complex member BBS12 (BBS12), found in Homo sapiens (Human).